Here is a 92-residue protein sequence, read N- to C-terminus: CRISPR-associated endoribonuclease Cas2 2 (92 aa).

Position 12 (Asp12) interacts with Mg(2+).

Belongs to the CRISPR-associated endoribonuclease Cas2 protein family. As to quaternary structure, homodimer, forms a heterotetramer with a Cas1 homodimer. Mg(2+) is required as a cofactor.

Its function is as follows. CRISPR (clustered regularly interspaced short palindromic repeat), is an adaptive immune system that provides protection against mobile genetic elements (viruses, transposable elements and conjugative plasmids). CRISPR clusters contain sequences complementary to antecedent mobile elements and target invading nucleic acids. CRISPR clusters are transcribed and processed into CRISPR RNA (crRNA). Functions as a ssRNA-specific endoribonuclease. Involved in the integration of spacer DNA into the CRISPR cassette. This chain is CRISPR-associated endoribonuclease Cas2 2 (cas22), found in Archaeoglobus fulgidus (strain ATCC 49558 / DSM 4304 / JCM 9628 / NBRC 100126 / VC-16).